We begin with the raw amino-acid sequence, 350 residues long: Twinfilin-1 (350 aa).

N-acetylserine is present on Ser2. Positions 2–139 (SHRTGIQASE…SLHGYKKYLL (138 aa)) constitute an ADF-H 1 domain. Ser143 and Ser277 each carry phosphoserine. An ADF-H 2 domain is found at 175 to 313 (LQGVAFPISR…TADFLYEEVH (139 aa)). Residue Tyr309 is modified to Phosphotyrosine. The disordered stretch occupies residues 316-350 (QHAHKQSFAKPKGPAGKRGIRRLIRGPAETEATTD). Phosphothreonine is present on Thr349.

The protein belongs to the actin-binding proteins ADF family. Twinfilin subfamily. In terms of assembly, interacts with G-actin; ADP-actin form and capping protein (CP). May also be able to interact with TWF2 and phosphoinositides, PI(4,5)P2. When bound to PI(4,5)P2, it is down-regulated. Interacts with ACTG1. In terms of processing, phosphorylated on serine and threonine residues.

It is found in the cytoplasm. It localises to the cytoskeleton. In terms of biological role, actin-binding protein involved in motile and morphological processes. Inhibits actin polymerization, likely by sequestering G-actin. By capping the barbed ends of filaments, it also regulates motility. Seems to play an important role in clathrin-mediated endocytosis and distribution of endocytic organelles. The sequence is that of Twinfilin-1 (TWF1) from Pongo abelii (Sumatran orangutan).